The primary structure comprises 403 residues: F-box only protein 22 (403 aa).

Met1 is modified (N-acetylmethionine). The F-box domain maps to Ser19–Ala71. Ser128 carries the post-translational modification Phosphoserine. At Lys194 the chain carries N6-acetyllysine.

Directly interacts with SKP1 and CUL1.

It localises to the cytoplasm. Its subcellular location is the myofibril. The protein resides in the sarcomere. The protein localises to the z line. Functionally, substrate-recognition component of the SCF (SKP1-CUL1-F-box protein)-type E3 ubiquitin ligase complex. Promotes the proteasome-dependent degradation of key sarcomeric proteins, such as alpha-actinin (ACTN2) and filamin-C (FLNC), essential for maintenance of normal contractile function. In Pongo abelii (Sumatran orangutan), this protein is F-box only protein 22 (FBXO22).